The chain runs to 261 residues: Thiazole synthase (261 aa).

The active-site Schiff-base intermediate with DXP is the K102. Residues G163, 189–190 (AG), and 211–212 (NT) contribute to the 1-deoxy-D-xylulose 5-phosphate site.

It belongs to the ThiG family. In terms of assembly, homotetramer. Forms heterodimers with either ThiH or ThiS.

Its subcellular location is the cytoplasm. The enzyme catalyses [ThiS sulfur-carrier protein]-C-terminal-Gly-aminoethanethioate + 2-iminoacetate + 1-deoxy-D-xylulose 5-phosphate = [ThiS sulfur-carrier protein]-C-terminal Gly-Gly + 2-[(2R,5Z)-2-carboxy-4-methylthiazol-5(2H)-ylidene]ethyl phosphate + 2 H2O + H(+). It functions in the pathway cofactor biosynthesis; thiamine diphosphate biosynthesis. Catalyzes the rearrangement of 1-deoxy-D-xylulose 5-phosphate (DXP) to produce the thiazole phosphate moiety of thiamine. Sulfur is provided by the thiocarboxylate moiety of the carrier protein ThiS. In vitro, sulfur can be provided by H(2)S. The protein is Thiazole synthase of Acinetobacter baumannii (strain SDF).